The primary structure comprises 312 residues: Putative S-adenosyl-L-methionine-dependent methyltransferase Mkms_0097 (312 aa).

S-adenosyl-L-methionine is bound by residues Asp-134 and 163–164 (DL).

This sequence belongs to the UPF0677 family.

In terms of biological role, exhibits S-adenosyl-L-methionine-dependent methyltransferase activity. The chain is Putative S-adenosyl-L-methionine-dependent methyltransferase Mkms_0097 from Mycobacterium sp. (strain KMS).